Here is a 201-residue protein sequence, read N- to C-terminus: Regulator of G-protein signaling 16 (201 aa).

Residues C2 and C12 are each lipidated (S-palmitoyl cysteine). An RGS domain is found at S64–A180. A Phosphotyrosine; by EGFR modification is found at Y167. Y176 carries the post-translational modification Phosphotyrosine. The disordered stretch occupies residues A181–T201.

Interacts with GNAI1 and GNAQ. Interacts with GNAI3, GNAI3 and GNAO1. Post-translationally, palmitoylated on Cys-2 and/or Cys-12. In terms of processing, phosphorylated. Phosphorylation at Tyr-167 by EGFR enhances GTPase accelerating (GAP) activity toward GNAI1. Retinal; also predominantly expressed in the liver and pituitary.

It is found in the membrane. Regulates G protein-coupled receptor signaling cascades. Inhibits signal transduction by increasing the GTPase activity of G protein alpha subunits, thereby driving them into their inactive GDP-bound form. Plays an important role in the phototransduction cascade by regulating the lifetime and effective concentration of activated transducin alpha. May regulate extra and intracellular mitogenic signals. This is Regulator of G-protein signaling 16 (Rgs16) from Mus musculus (Mouse).